The primary structure comprises 154 residues: Protein X (154 aa).

The tract at residues 68 to 117 (PCALRFTSARRMETTVNAPWNLPTTLHKRTLGLSPRSTTWIEEYIKDCVF) is mitochondrial targeting sequence.

The protein belongs to the orthohepadnavirus protein X family. May form homodimer. May interact with host CEBPA, CFLAR, CREB1, DDB1, E4F1, HBXIP, HSPD1/HSP60, NFKBIA, POLR2E and SMAD4. Interacts with host SMC5-SMC6 complex and induces its degradation. Interacts with host TRPC4AP; leading to prevent ubiquitination of TRPC4AP. Interacts with host PLSCR1; this interaction promotes ubiquitination and degradation of HBx and impairs HBx-mediated cell proliferation. In terms of processing, a fraction may be phosphorylated in insect cells and HepG2 cells, a human hepatoblastoma cell line. Phosphorylated in vitro by host protein kinase C or mitogen-activated protein kinase. N-acetylated in insect cells.

The protein resides in the host cytoplasm. It localises to the host nucleus. The protein localises to the host mitochondrion. Multifunctional protein that plays a role in silencing host antiviral defenses and promoting viral transcription. Does not seem to be essential for HBV infection. May be directly involved in development of cirrhosis and liver cancer (hepatocellular carcinoma). Most of cytosolic activities involve modulation of cytosolic calcium. The effect on apoptosis is controversial depending on the cell types in which the studies have been conducted. May induce apoptosis by localizing in mitochondria and causing loss of mitochondrial membrane potential. May also modulate apoptosis by binding host CFLAR, a key regulator of the death-inducing signaling complex (DISC). Promotes viral transcription by using the host E3 ubiquitin ligase DDB1 to target the SMC5-SMC6 complex to proteasomal degradation. This host complex would otherwise bind to viral episomal DNA, and prevents its transcription. Moderately stimulates transcription of many different viral and cellular transcription elements. Promoters and enhancers stimulated by HBx contain DNA binding sites for NF-kappa-B, AP-1, AP-2, c-EBP, ATF/CREB, or the calcium-activated factor NF-AT. The protein is Protein X of Homo sapiens (Human).